Consider the following 108-residue polypeptide: U3-lycotoxin-Ls1w (108 aa).

The first 20 residues, 1–20, serve as a signal peptide directing secretion; it reads MKFVLLFGVLLVTLFSYSSA. Residues 21 to 44 constitute a propeptide that is removed on maturation; that stretch reads EMLDDFDQADEDELLSLIEKEEAR. 4 disulfides stabilise this stretch: Cys-48-Cys-63, Cys-55-Cys-72, Cys-62-Cys-87, and Cys-74-Cys-85.

The protein belongs to the neurotoxin 19 (CSTX) family. 01 subfamily. In terms of tissue distribution, expressed by the venom gland.

The protein localises to the secreted. In Lycosa singoriensis (Wolf spider), this protein is U3-lycotoxin-Ls1w.